Here is a 170-residue protein sequence, read N- to C-terminus: N-glycosidase R617 (170 aa).

It belongs to the YbiA family.

It carries out the reaction 2,5-diamino-6-hydroxy-4-(5-phosphoribosylamino)-pyrimidine + H2O = 2,5,6-triamino-4-hydroxypyrimidine + D-ribose 5-phosphate. The enzyme catalyses 5-amino-6-(5-phospho-D-ribosylamino)uracil + H2O = 5,6-diaminouracil + D-ribose 5-phosphate. Functionally, catalyzes the hydrolysis of the N-glycosidic bond in the first two intermediates of riboflavin biosynthesis, which are highly reactive metabolites, yielding relatively innocuous products. Thus, can divert a surplus of harmful intermediates into relatively harmless products and pre-empt the damage these intermediates would otherwise do. May act on other substrates in vivo. This chain is N-glycosidase R617, found in Acanthamoeba polyphaga mimivirus (APMV).